A 44-amino-acid polypeptide reads, in one-letter code: MTTLLLAKLPEAYAPFDPIVDVLPVIPLLFLLLAFVWQASVSFR.

Residues 1-7 (MTTLLLA) constitute a propeptide that is removed on maturation. The helical transmembrane segment at 19 to 39 (IVDVLPVIPLLFLLLAFVWQA) threads the bilayer.

It belongs to the PsbK family. PSII is composed of 1 copy each of membrane proteins PsbA, PsbB, PsbC, PsbD, PsbE, PsbF, PsbH, PsbI, PsbJ, PsbK, PsbL, PsbM, PsbT, PsbX, PsbY, PsbZ, Psb30/Ycf12, at least 3 peripheral proteins of the oxygen-evolving complex and a large number of cofactors. It forms dimeric complexes.

The protein localises to the plastid. Its subcellular location is the chloroplast thylakoid membrane. Functionally, one of the components of the core complex of photosystem II (PSII). PSII is a light-driven water:plastoquinone oxidoreductase that uses light energy to abstract electrons from H(2)O, generating O(2) and a proton gradient subsequently used for ATP formation. It consists of a core antenna complex that captures photons, and an electron transfer chain that converts photonic excitation into a charge separation. This chain is Photosystem II reaction center protein K, found in Tupiella akineta (Green alga).